Reading from the N-terminus, the 802-residue chain is Threonine--tRNA ligase 2, cytoplasmic (802 aa).

Alanine 2 carries the N-acetylalanine modification. Coiled-coil stretches lie at residues 3 to 23 (AEAL…EDIR) and 76 to 96 (AEER…AQEA). The segment covering 86–98 (ESAELEAAQEAGA) has biased composition (low complexity). A disordered region spans residues 86 to 123 (ESAELEAAQEAGAQPPPSQSQDKDMKKKKMKESEADSE). The span at 106-123 (QDKDMKKKKMKESEADSE) shows a compositional bias: basic and acidic residues. Residues 157 to 222 (DTSNIITVRV…EGDSSLELLT (66 aa)) form the TGS domain. A Phosphoserine modification is found at serine 453. A Nuclear localization signal motif is present at residues 786 to 792 (KLKNLRK).

The protein belongs to the class-II aminoacyl-tRNA synthetase family. In terms of assembly, may be a component of the multisynthetase complex (MSC), a large multi-subunit complex which contains at least eight different aminoacyl-tRNA synthetases plus three auxillary subunits AIMP1, AIMP2 and EEF1E1. Interacts with the MSC components EPRS1, AIMP1, AIMP2 and KARS1.

It is found in the cytoplasm. The protein resides in the nucleus. It carries out the reaction tRNA(Thr) + L-threonine + ATP = L-threonyl-tRNA(Thr) + AMP + diphosphate + H(+). Functionally, catalyzes the attachment of threonine to tRNA(Thr) in a two-step reaction: threonine is first activated by ATP to form Thr-AMP and then transferred to the acceptor end of tRNA(Thr). Also edits incorrectly charged tRNA(Thr) via its editing domain, at the post-transfer stage. The sequence is that of Threonine--tRNA ligase 2, cytoplasmic from Homo sapiens (Human).